The following is a 481-amino-acid chain: MVLSIQTNKNVGSITQIIGPVIDAAFAPGQLPNIYNALVIKGTNQAGQEVAVTCEVQQLLGDHCVRAVAMNATDGLMRGMNIVDTGKPLTVPVGKVTLGRIFNVLGEPVDGLEAVDSKESLPIHRKAPAFVDLDTKLAIFETGIKVVDLLAPYRRGGKIGLFGGAGVGKTVLIMELINNIAKAHGGVSVFGGVGERTREGNDLYMEMKESGVIQEKNMSASKVALVYGQMNEPPGARMRVGLTALTMAEYFRDINKQDVLLFIDNIFRFVQAGSEVSALLGRMPSAVGYQPTLATEMGGLQERITSTKDGSITSIQAVYVPADDLTDPAPATTFAHLDATTVLSRGLASKGIYPAVDPLDSTSTMLQPWIVGEEHYSCAQNVKETLQRYKELQDIIAILGLDELSEEDRKVVARARKIERFLSQPFFVAEVFTGSPGKYVSLKETIQGFNKILTGELDDLPEQAFYLVGTLDEAVAKAATL.

163–170 (GGAGVGKT) contacts ATP.

Belongs to the ATPase alpha/beta chains family. F-type ATPases have 2 components, CF(1) - the catalytic core - and CF(0) - the membrane proton channel. CF(1) has five subunits: alpha(3), beta(3), gamma(1), delta(1), epsilon(1). CF(0) has four main subunits: a(1), b(1), b'(1) and c(9-12).

The protein resides in the plastid. Its subcellular location is the chloroplast thylakoid membrane. It catalyses the reaction ATP + H2O + 4 H(+)(in) = ADP + phosphate + 5 H(+)(out). Produces ATP from ADP in the presence of a proton gradient across the membrane. The catalytic sites are hosted primarily by the beta subunits. The polypeptide is ATP synthase subunit beta, chloroplastic (Tupiella akineta (Green alga)).